The primary structure comprises 33 residues: Cytochrome b6-f complex subunit 8 (33 aa).

A helical membrane pass occupies residues 2–22 (LFTFAWASLAAIFTFSIAMVV).

It belongs to the PetN family. The 4 large subunits of the cytochrome b6-f complex are cytochrome b6, subunit IV (17 kDa polypeptide, PetD), cytochrome f and the Rieske protein, while the 4 small subunits are PetG, PetL, PetM and PetN. The complex functions as a dimer.

The protein resides in the cellular thylakoid membrane. Its function is as follows. Component of the cytochrome b6-f complex, which mediates electron transfer between photosystem II (PSII) and photosystem I (PSI), cyclic electron flow around PSI, and state transitions. The polypeptide is Cytochrome b6-f complex subunit 8 (Prochlorococcus marinus (strain MIT 9211)).